A 529-amino-acid polypeptide reads, in one-letter code: Bifunctional purine biosynthesis protein PurH (529 aa).

The region spanning M1–V148 is the MGS-like domain. K287 bears the N6-acetyllysine mark.

The protein belongs to the PurH family.

It carries out the reaction (6R)-10-formyltetrahydrofolate + 5-amino-1-(5-phospho-beta-D-ribosyl)imidazole-4-carboxamide = 5-formamido-1-(5-phospho-D-ribosyl)imidazole-4-carboxamide + (6S)-5,6,7,8-tetrahydrofolate. It catalyses the reaction IMP + H2O = 5-formamido-1-(5-phospho-D-ribosyl)imidazole-4-carboxamide. It participates in purine metabolism; IMP biosynthesis via de novo pathway; 5-formamido-1-(5-phospho-D-ribosyl)imidazole-4-carboxamide from 5-amino-1-(5-phospho-D-ribosyl)imidazole-4-carboxamide (10-formyl THF route): step 1/1. The protein operates within purine metabolism; IMP biosynthesis via de novo pathway; IMP from 5-formamido-1-(5-phospho-D-ribosyl)imidazole-4-carboxamide: step 1/1. This chain is Bifunctional purine biosynthesis protein PurH, found in Escherichia coli O127:H6 (strain E2348/69 / EPEC).